A 370-amino-acid chain; its full sequence is Anhydro-N-acetylmuramic acid kinase (370 aa).

13 to 20 (GTSMDGVD) lines the ATP pocket.

This sequence belongs to the anhydro-N-acetylmuramic acid kinase family.

It carries out the reaction 1,6-anhydro-N-acetyl-beta-muramate + ATP + H2O = N-acetyl-D-muramate 6-phosphate + ADP + H(+). It participates in amino-sugar metabolism; 1,6-anhydro-N-acetylmuramate degradation. Its pathway is cell wall biogenesis; peptidoglycan recycling. In terms of biological role, catalyzes the specific phosphorylation of 1,6-anhydro-N-acetylmuramic acid (anhMurNAc) with the simultaneous cleavage of the 1,6-anhydro ring, generating MurNAc-6-P. Is required for the utilization of anhMurNAc either imported from the medium or derived from its own cell wall murein, and thus plays a role in cell wall recycling. This chain is Anhydro-N-acetylmuramic acid kinase, found in Shewanella denitrificans (strain OS217 / ATCC BAA-1090 / DSM 15013).